Reading from the N-terminus, the 349-residue chain is Protein RecA (349 aa).

65-72 contacts ATP; that stretch reads GPESSGKT. Residues 329 to 349 are disordered; that stretch reads FDGDVDENENEDDSPKTLFDE. Over residues 331 to 340 the composition is skewed to acidic residues; the sequence is GDVDENENED.

This sequence belongs to the RecA family.

It localises to the cytoplasm. In terms of biological role, can catalyze the hydrolysis of ATP in the presence of single-stranded DNA, the ATP-dependent uptake of single-stranded DNA by duplex DNA, and the ATP-dependent hybridization of homologous single-stranded DNAs. It interacts with LexA causing its activation and leading to its autocatalytic cleavage. The polypeptide is Protein RecA (Staphylococcus epidermidis (strain ATCC 35984 / DSM 28319 / BCRC 17069 / CCUG 31568 / BM 3577 / RP62A)).